Here is a 375-residue protein sequence, read N- to C-terminus: Lipid-A-disaccharide synthase (375 aa).

It belongs to the LpxB family.

The catalysed reaction is a lipid X + a UDP-2-N,3-O-bis[(3R)-3-hydroxyacyl]-alpha-D-glucosamine = a lipid A disaccharide + UDP + H(+). It participates in bacterial outer membrane biogenesis; LPS lipid A biosynthesis. Condensation of UDP-2,3-diacylglucosamine and 2,3-diacylglucosamine-1-phosphate to form lipid A disaccharide, a precursor of lipid A, a phosphorylated glycolipid that anchors the lipopolysaccharide to the outer membrane of the cell. The polypeptide is Lipid-A-disaccharide synthase (Pseudomonas putida (strain ATCC 47054 / DSM 6125 / CFBP 8728 / NCIMB 11950 / KT2440)).